Consider the following 216-residue polypeptide: Dual specificity protein phosphatase VP2 (216 aa).

The interval 1 to 50 is disordered; that stretch reads MHGNGGQPAAGGSESALSREGQPGPSGAAQGQVISNERSPRRYSTRTING. Positions 21 to 32 are enriched in low complexity; it reads GQPGPSGAAQGQ. The active-site Phosphocysteine intermediate is Cys95. The interval 165-187 is disordered; the sequence is DREADFTPSEEDGGTTSSDFDED. Residues 172-187 show a composition bias toward acidic residues; that stretch reads PSEEDGGTTSSDFDED.

This sequence belongs to the gyrovirus protein VP2 family.

The catalysed reaction is O-phospho-L-tyrosyl-[protein] + H2O = L-tyrosyl-[protein] + phosphate. It catalyses the reaction O-phospho-L-seryl-[protein] + H2O = L-seryl-[protein] + phosphate. It carries out the reaction O-phospho-L-threonyl-[protein] + H2O = L-threonyl-[protein] + phosphate. Functionally, may act as a scaffold protein in virion assembly. May also play a role in intracellular signaling during viral replication. The polypeptide is Dual specificity protein phosphatase VP2 (VP2) (Gallus gallus (Chicken)).